The chain runs to 367 residues: 3-dehydroquinate synthase (367 aa).

Residues 69–74 (DGEAFK), 103–107 (GVVGD), 127–128 (TT), Lys-140, Lys-149, and 167–170 (TLAT) each bind NAD(+). 3 residues coordinate Zn(2+): Glu-182, His-245, and His-262.

The protein belongs to the sugar phosphate cyclases superfamily. Dehydroquinate synthase family. The cofactor is Co(2+). It depends on Zn(2+) as a cofactor. NAD(+) serves as cofactor.

Its subcellular location is the cytoplasm. It carries out the reaction 7-phospho-2-dehydro-3-deoxy-D-arabino-heptonate = 3-dehydroquinate + phosphate. It participates in metabolic intermediate biosynthesis; chorismate biosynthesis; chorismate from D-erythrose 4-phosphate and phosphoenolpyruvate: step 2/7. Its function is as follows. Catalyzes the conversion of 3-deoxy-D-arabino-heptulosonate 7-phosphate (DAHP) to dehydroquinate (DHQ). The protein is 3-dehydroquinate synthase of Azotobacter vinelandii (strain DJ / ATCC BAA-1303).